The sequence spans 410 residues: 2,3-bisphosphoglycerate-independent phosphoglycerate mutase (410 aa).

This sequence belongs to the BPG-independent phosphoglycerate mutase family. A-PGAM subfamily.

It catalyses the reaction (2R)-2-phosphoglycerate = (2R)-3-phosphoglycerate. It participates in carbohydrate degradation; glycolysis; pyruvate from D-glyceraldehyde 3-phosphate: step 3/5. Functionally, catalyzes the interconversion of 2-phosphoglycerate and 3-phosphoglycerate. The polypeptide is 2,3-bisphosphoglycerate-independent phosphoglycerate mutase (Pyrococcus abyssi (strain GE5 / Orsay)).